The following is a 1049-amino-acid chain: Isoleucine--tRNA ligase (1049 aa).

The 'HIGH' region motif lies at 48–58 (PYTTGRIHLGT). The 'KMSKS' region motif lies at 596 to 600 (KMSKS). K599 serves as a coordination point for ATP.

The protein belongs to the class-I aminoacyl-tRNA synthetase family. IleS type 2 subfamily. As to quaternary structure, monomer. Zn(2+) is required as a cofactor.

It is found in the cytoplasm. It carries out the reaction tRNA(Ile) + L-isoleucine + ATP = L-isoleucyl-tRNA(Ile) + AMP + diphosphate. In terms of biological role, catalyzes the attachment of isoleucine to tRNA(Ile). As IleRS can inadvertently accommodate and process structurally similar amino acids such as valine, to avoid such errors it has two additional distinct tRNA(Ile)-dependent editing activities. One activity is designated as 'pretransfer' editing and involves the hydrolysis of activated Val-AMP. The other activity is designated 'posttransfer' editing and involves deacylation of mischarged Val-tRNA(Ile). This chain is Isoleucine--tRNA ligase, found in Methanothrix thermoacetophila (strain DSM 6194 / JCM 14653 / NBRC 101360 / PT) (Methanosaeta thermophila).